A 429-amino-acid chain; its full sequence is Adenylosuccinate synthetase (429 aa).

GTP-binding positions include 13-19 and 41-43; these read GDEGKGK and GHT. Aspartate 14 (proton acceptor) is an active-site residue. Mg(2+) contacts are provided by aspartate 14 and glycine 41. Residues 14–17, 39–42, threonine 130, arginine 144, glutamine 225, threonine 240, and arginine 304 contribute to the IMP site; these read DEGK and NAGH. The Proton donor role is filled by histidine 42. Residue 300 to 306 coordinates substrate; that stretch reads ATTGRAR. GTP contacts are provided by residues arginine 306, 332-334, and 414-416; these read KLD and STG.

This sequence belongs to the adenylosuccinate synthetase family. In terms of assembly, homodimer. Requires Mg(2+) as cofactor.

Its subcellular location is the cytoplasm. The catalysed reaction is IMP + L-aspartate + GTP = N(6)-(1,2-dicarboxyethyl)-AMP + GDP + phosphate + 2 H(+). It participates in purine metabolism; AMP biosynthesis via de novo pathway; AMP from IMP: step 1/2. In terms of biological role, plays an important role in the de novo pathway of purine nucleotide biosynthesis. Catalyzes the first committed step in the biosynthesis of AMP from IMP. In Acidithiobacillus ferrooxidans (Thiobacillus ferrooxidans), this protein is Adenylosuccinate synthetase.